A 340-amino-acid polypeptide reads, in one-letter code: Ribonucleoside-diphosphate reductase subunit beta (340 aa).

Asp88 and His122 together coordinate Fe cation. Tyr126 is an active-site residue. His216 serves as a coordination point for Fe cation.

This sequence belongs to the ribonucleoside diphosphate reductase small chain family. Tetramer of two alpha and two beta subunits. Fe cation is required as a cofactor.

The enzyme catalyses a 2'-deoxyribonucleoside 5'-diphosphate + [thioredoxin]-disulfide + H2O = a ribonucleoside 5'-diphosphate + [thioredoxin]-dithiol. Provides the precursors necessary for DNA synthesis. Catalyzes the biosynthesis of deoxyribonucleotides from the corresponding ribonucleotides. The sequence is that of Ribonucleoside-diphosphate reductase subunit beta (nrdF) from Mycoplasma genitalium (strain ATCC 33530 / DSM 19775 / NCTC 10195 / G37) (Mycoplasmoides genitalium).